Consider the following 307-residue polypeptide: Ornithine carbamoyltransferase (307 aa).

Carbamoyl phosphate is bound by residues 50–53 (STRT), Q77, R101, and 128–131 (HPCQ). L-ornithine-binding positions include N160, D224, and 228 to 229 (SM). Residues 264-265 (CL) and R292 each bind carbamoyl phosphate.

This sequence belongs to the aspartate/ornithine carbamoyltransferase superfamily. OTCase family.

Its subcellular location is the cytoplasm. The catalysed reaction is carbamoyl phosphate + L-ornithine = L-citrulline + phosphate + H(+). It functions in the pathway amino-acid biosynthesis; L-arginine biosynthesis; L-arginine from L-ornithine and carbamoyl phosphate: step 1/3. Reversibly catalyzes the transfer of the carbamoyl group from carbamoyl phosphate (CP) to the N(epsilon) atom of ornithine (ORN) to produce L-citrulline. The polypeptide is Ornithine carbamoyltransferase (Clavibacter michiganensis subsp. michiganensis (strain NCPPB 382)).